Here is a 341-residue protein sequence, read N- to C-terminus: MPSEIVDRKRKSRGTRDVAEILRQWREYNEQIEAESCIDGGGPKSIRKPPPKGSRKGCMKGKGGPENGICDYRGVRQRRWGKWVAEIREPDGGARLWLGTFSSSYEAALAYDEAAKAIYGQSARLNLPEITNRSSSTAATATVSGSVTAFSDESEVCAREDTNASSGFGQVKLEDCSDEYVLLDSSQCIKEELKGKEEVREEHNLAVGFGIGQDSKRETLDAWLMGNGNEQEPLEFGVDETFDINELLGILNDNNVSGQETMQYQVDRHPNFSYQTQFPNSNLLGSLNPMEIAQPGVDYGCPYVQPSDMENYGIDLDHRRFNDLDIQDLDFGGDKDVHGST.

Positions 8–48 (RKRKSRGTRDVAEILRQWREYNEQIEAESCIDGGGPKSIRK) match the Nuclear localization signal motif. A disordered region spans residues 36–63 (SCIDGGGPKSIRKPPPKGSRKGCMKGKG). Residues 45 to 59 (SIRKPPPKGSRKGCM) show a composition bias toward basic residues. The segment at residues 71-128 (DYRGVRQRRWGKWVAEIREPDGGARLWLGTFSSSYEAALAYDEAAKAIYGQSARLNLP) is a DNA-binding region (AP2/ERF).

The protein belongs to the AP2/ERF transcription factor family. ERF subfamily.

It is found in the nucleus. Functionally, transcriptional activator that binds specifically to the DNA sequence 5'-[AG]CCGAC-3'. Binding to the C-repeat/DRE element mediates high salinity- and abscisic acid-inducible transcription. This chain is Dehydration-responsive element-binding protein 2C (DREB2C), found in Arabidopsis thaliana (Mouse-ear cress).